The following is a 265-amino-acid chain: Probable esterase tazC (265 aa).

Active-site charge relay system residues include Ser119, Asp209, and His236.

The protein belongs to the LovG family.

It functions in the pathway secondary metabolite biosynthesis. Its function is as follows. Probable esterase; part of the gene cluster that mediates the biosynthesis of azaterrilone A and other azaphilones, a class of fungal metabolites characterized by a highly oxygenated pyrano-quinone bicyclic core and exhibiting a broad range of bioactivities. The first step of the pathway begins with the non-reducing polyketide synthase tazA that assembles one acetyl-CoA starter unit, five malonyl-CoA units, and catalyzes a series of Claisen condensations, methylation, PT-mediated cyclization, and finally releases the first hexaketide precursor through the R-domain. The tazA product then undergoes reduction on its terminal ketone and the following pyran-ring formation by yet undetermined enzyme(s). Dehydration and enoyl reduction, possibly involving the trans-enoyl reductase tazE leads to the next intermediate. TazD is predicted as an acetyltransferase and might catalyze the acetylation steps leading to the synthesis of azaterrilone A. Azaterrilone A is not the final product of the taz pathway and both the highly reducing polyketide synthase tazB and the dual enzyme tazHJ catalyze late steps of the pathway, leading to the production of the 2 final stereoisomers that contain additional polyketide modification whose structures have still to be determined. The protein is Probable esterase tazC of Aspergillus terreus (strain NIH 2624 / FGSC A1156).